The primary structure comprises 123 residues: DNA-directed RNA polymerase I subunit RPA12 (123 aa).

Zn(2+) contacts are provided by C17, C20, C35, C38, C84, and C87. The segment at 17-38 adopts a C4-type zinc-finger fold; it reads CPDCGSVLPLPGIQDTVICSRC. A TFIIS-type zinc finger spans residues 80–120; the sequence is IDRRCPRCGHEGMAYHTRQMRSADEGQTVFYTCINCKFQEK. The Hairpin motif lies at 103 to 104; the sequence is DE. Zn(2+)-binding residues include C112 and C115.

Belongs to the archaeal RpoM/eukaryotic RPA12/RPB9/RPC11 RNA polymerase family. In terms of assembly, component of the RNA polymerase I (Pol I) complex consisting of 13 subunits: a ten-subunit catalytic core composed of POLR1A/RPA1, POLR1B/RPA2, POLR1C/RPAC1, POLR1D/RPAC2, POLR1H/RPA12, POLR2E/RPABC1, POLR2F/RPABC2, POLR2H/RPABC3, POLR2K/RPABC4 and POLR2L/RPABC5; a mobile stalk subunit POLR1F/RPA43 protruding from the core and additional subunits homologous to general transcription factors POLR1E/RPA49 and POLR1G/RPA34. Part of Pol I pre-initiation complex (PIC), in which Pol I core assembles with RRN3 and promoter-bound UTBF and SL1/TIF-IB complex.

The protein resides in the nucleus. The protein localises to the nucleolus. Core component of RNA polymerase I (Pol I), a DNA-dependent RNA polymerase which synthesizes ribosomal RNA precursors using the four ribonucleoside triphosphates as substrates. Can mediate Pol I proofreading of the nascent RNA transcript. Anchors into the Pol I active site to monitor transcription fidelity and cleave mis-incorporated 5'-ribonucleotides. This chain is DNA-directed RNA polymerase I subunit RPA12, found in Mus musculus (Mouse).